The sequence spans 38 residues: MKVRASVRRRTADCQVVRRKGRIYIINKKNPRLKQRQG.

It belongs to the bacterial ribosomal protein bL36 family.

This is Large ribosomal subunit protein bL36 from Methylacidiphilum infernorum (isolate V4) (Methylokorus infernorum (strain V4)).